A 922-amino-acid chain; its full sequence is Hexokinase-3 (922 aa).

Residues Met1–Val23 are disordered. 2 Hexokinase domains span residues Arg25 to Ala469 and Ala475 to Ala911. Positions His82–Val218 are hexokinase small subdomain 1. ATP is bound at residue Glu93 to Ser100. Glu93–Arg102 contributes to the D-glucose 6-phosphate binding site. D-glucose-binding positions include Ser166, Thr183 to Lys184, and Asn219 to Asp220. A hexokinase large subdomain 1 region spans residues Asn219–Asp458. Positions 220 and 243 each coordinate D-glucose 6-phosphate. D-glucose is bound by residues Asn246, Glu271, and Gln302–Glu305. A D-glucose 6-phosphate-binding site is contributed by Gly424–Arg426. Residues Arg436–Ile437 and Asp540–Asn545 contribute to the ATP site. Positions Asp529 to Val660 are hexokinase small subdomain 2. Asp540 to Thr544 is a binding site for D-glucose 6-phosphate. Residues Ser608–Phe609, Thr625–Lys626, and Asn661–Asp662 each bind D-glucose. The hexokinase large subdomain 2 stretch occupies residues Asn661 to Asp900. D-glucose 6-phosphate is bound by residues Asp662 and Thr685. Thr685 contributes to the ATP binding site. Residues Thr687 to Asn688, Glu713, and Glu747 each bind D-glucose. ATP is bound by residues Gly752 to Met753, Thr789 to Ser793, and Thr868 to Leu872. D-glucose 6-phosphate is bound by residues Asp866–Thr868 and Ser902.

This sequence belongs to the hexokinase family.

It carries out the reaction a D-hexose + ATP = a D-hexose 6-phosphate + ADP + H(+). The enzyme catalyses D-fructose + ATP = D-fructose 6-phosphate + ADP + H(+). The catalysed reaction is D-glucose + ATP = D-glucose 6-phosphate + ADP + H(+). It functions in the pathway carbohydrate metabolism; hexose metabolism. Its pathway is carbohydrate degradation; glycolysis; D-glyceraldehyde 3-phosphate and glycerone phosphate from D-glucose: step 1/4. Hexokinase is an allosteric enzyme inhibited by its product D-glucose 6-phosphate. In terms of biological role, catalyzes the phosphorylation of hexose, such as D-glucose and D-fructose, to hexose 6-phosphate (D-glucose 6-phosphate and D-fructose 6-phosphate, respectively). Mediates the initial step of glycolysis by catalyzing phosphorylation of D-glucose to D-glucose 6-phosphate. In Mus musculus (Mouse), this protein is Hexokinase-3.